A 120-amino-acid polypeptide reads, in one-letter code: Dihydroneopterin triphosphate 2'-epimerase (120 aa).

It belongs to the DHNA family. As to quaternary structure, homooctamer.

The enzyme catalyses 7,8-dihydroneopterin 3'-triphosphate = 7,8-dihydromonapterin 3'-triphosphate. Catalyzes the epimerization of carbon 2' of the side chain of 7,8-dihydroneopterin triphosphate (H2NTP) to form 7,8-dihydromonapterin triphosphate (H2MTP). Is required for tetrahydromonapterin biosynthesis. In Escherichia coli O157:H7, this protein is Dihydroneopterin triphosphate 2'-epimerase (folX).